Here is a 1604-residue protein sequence, read N- to C-terminus: E3 ubiquitin-protein ligase HECW1 (1604 aa).

A C2 domain is found at 182–318 (SAAPIFKGIG…LERHAIGDRV (137 aa)). 4 disordered regions span residues 350 to 539 (DEEI…CSLP), 572 to 604 (PSAQ…LSEV), 642 to 667 (GIGA…QQGA), and 727 to 826 (STVF…TIDE). A compositionally biased stretch (polar residues) spans 362–380 (SAETQDSIMNSMVGNSNGE). A compositionally biased stretch (basic and acidic residues) spans 387–396 (EFCKDAKPES). Over residues 398 to 412 (SEGNGVNSSENQNQE) the composition is skewed to polar residues. 2 stretches are compositionally biased toward acidic residues: residues 435-444 (APEEPGELQD) and 458-469 (EVAEGLPLDEDS). Over residues 494–505 (GAREEEMQKGKD) the composition is skewed to basic and acidic residues. A compositionally biased stretch (acidic residues) spans 580 to 589 (TEEEDGLEEE). Residues 590 to 601 (STLKESSEKDGL) are compositionally biased toward basic and acidic residues. Polar residues-rich tracts occupy residues 654–667 (STGS…QQGA), 748–762 (DSVQ…STNG), and 803–812 (HNSQPISQLP). Positions 826 to 859 (EPLPPNWEARIDSHGRVFYVDHINRTTTWQRPSM) constitute a WW 1 domain. At S871 the chain carries Phosphoserine. The stretch at 871 to 898 (SVHQMEQLNRRYQNIQRTMATERAEEDS) forms a coiled coil. The segment at 890-936 (ATERAEEDSGNQNSEQIPDGGGGGGGGSDSEAESSQSSLDLRREGSL) is disordered. The segment covering 908-917 (DGGGGGGGGS) has biased composition (gly residues). 2 positions are modified to phosphoserine: S935 and S937. The WW 2 domain maps to 1016–1049 (LELPRGWEIKTDHQGKSFFVDHNSRATTFIDPRI). Positions 1269-1604 (SRKELQRNKL…VEETSTFGLE (336 aa)) constitute an HECT domain. C1572 (glycyl thioester intermediate) is an active-site residue.

As to quaternary structure, interacts with DVL1 and SSR3. Predominantly expressed in neurons of the spinal cord.

Its subcellular location is the cytoplasm. The enzyme catalyses S-ubiquitinyl-[E2 ubiquitin-conjugating enzyme]-L-cysteine + [acceptor protein]-L-lysine = [E2 ubiquitin-conjugating enzyme]-L-cysteine + N(6)-ubiquitinyl-[acceptor protein]-L-lysine.. The protein operates within protein modification; protein ubiquitination. Its function is as follows. E3 ubiquitin-protein ligase that mediates ubiquitination and subsequent degradation of DVL1. The protein is E3 ubiquitin-protein ligase HECW1 (Hecw1) of Mus musculus (Mouse).